Here is a 243-residue protein sequence, read N- to C-terminus: 1-(5-phosphoribosyl)-5-[(5-phosphoribosylamino)methylideneamino] imidazole-4-carboxamide isomerase (243 aa).

Asp-10 (proton acceptor) is an active-site residue. Asp-131 serves as the catalytic Proton donor.

The protein belongs to the HisA/HisF family.

The protein resides in the cytoplasm. The enzyme catalyses 1-(5-phospho-beta-D-ribosyl)-5-[(5-phospho-beta-D-ribosylamino)methylideneamino]imidazole-4-carboxamide = 5-[(5-phospho-1-deoxy-D-ribulos-1-ylimino)methylamino]-1-(5-phospho-beta-D-ribosyl)imidazole-4-carboxamide. It functions in the pathway amino-acid biosynthesis; L-histidine biosynthesis; L-histidine from 5-phospho-alpha-D-ribose 1-diphosphate: step 4/9. This is 1-(5-phosphoribosyl)-5-[(5-phosphoribosylamino)methylideneamino] imidazole-4-carboxamide isomerase from Rhizorhabdus wittichii (strain DSM 6014 / CCUG 31198 / JCM 15750 / NBRC 105917 / EY 4224 / RW1) (Sphingomonas wittichii).